Consider the following 418-residue polypeptide: Serine hydroxymethyltransferase (418 aa).

Residues Leu121 and 125 to 127 (GHL) each bind (6S)-5,6,7,8-tetrahydrofolate. Lys230 bears the N6-(pyridoxal phosphate)lysine mark. Position 356 to 358 (356 to 358 (SPF)) interacts with (6S)-5,6,7,8-tetrahydrofolate.

It belongs to the SHMT family. As to quaternary structure, homodimer. Pyridoxal 5'-phosphate is required as a cofactor.

It localises to the cytoplasm. It carries out the reaction (6R)-5,10-methylene-5,6,7,8-tetrahydrofolate + glycine + H2O = (6S)-5,6,7,8-tetrahydrofolate + L-serine. The protein operates within one-carbon metabolism; tetrahydrofolate interconversion. It participates in amino-acid biosynthesis; glycine biosynthesis; glycine from L-serine: step 1/1. Its function is as follows. Catalyzes the reversible interconversion of serine and glycine with tetrahydrofolate (THF) serving as the one-carbon carrier. This reaction serves as the major source of one-carbon groups required for the biosynthesis of purines, thymidylate, methionine, and other important biomolecules. Also exhibits THF-independent aldolase activity toward beta-hydroxyamino acids, producing glycine and aldehydes, via a retro-aldol mechanism. This Shewanella woodyi (strain ATCC 51908 / MS32) protein is Serine hydroxymethyltransferase.